The primary structure comprises 337 residues: D-lactate dehydrogenase (337 aa).

NAD(+) contacts are provided by residues 156 to 157 (HI), D176, 207 to 208 (VP), N213, 234 to 236 (CSR), and D260. R236 is an active-site residue. E265 is an active-site residue. Residue H297 is the Proton donor of the active site.

This sequence belongs to the D-isomer specific 2-hydroxyacid dehydrogenase family. Homodimer.

It carries out the reaction (R)-lactate + NAD(+) = pyruvate + NADH + H(+). The protein is D-lactate dehydrogenase of Lactobacillus helveticus (Lactobacillus suntoryeus).